Reading from the N-terminus, the 205-residue chain is Guanylate kinase (205 aa).

One can recognise a Guanylate kinase-like domain in the interval 6–185 (GLLIVLSGPS…ACERIKAIVV (180 aa)). Residue 13–20 (GPSGVGKG) coordinates ATP.

Belongs to the guanylate kinase family.

The protein localises to the cytoplasm. The enzyme catalyses GMP + ATP = GDP + ADP. In terms of biological role, essential for recycling GMP and indirectly, cGMP. The polypeptide is Guanylate kinase (Bacillus anthracis).